The primary structure comprises 321 residues: Anther-specific protein TA-29 (321 aa).

Positions 301–321 (RSDEEEAHHQSKQHKDEDIIN) are disordered.

In terms of tissue distribution, anther specific (tapetal cells).

This chain is Anther-specific protein TA-29 (TA-29), found in Nicotiana tabacum (Common tobacco).